The chain runs to 938 residues: Isoleucine--tRNA ligase (938 aa).

Positions 58–68 match the 'HIGH' region motif; it reads PYANGSIHIGH. N6-acetyllysine is present on Lys183. Glu561 is an L-isoleucyl-5'-AMP binding site. The 'KMSKS' region signature appears at 602–606; that stretch reads KMSKS. Position 605 (Lys605) interacts with ATP. Cys901, Cys904, Cys921, and Cys924 together coordinate Zn(2+).

Belongs to the class-I aminoacyl-tRNA synthetase family. IleS type 1 subfamily. As to quaternary structure, monomer. Zn(2+) is required as a cofactor.

It is found in the cytoplasm. It carries out the reaction tRNA(Ile) + L-isoleucine + ATP = L-isoleucyl-tRNA(Ile) + AMP + diphosphate. Functionally, catalyzes the attachment of isoleucine to tRNA(Ile). As IleRS can inadvertently accommodate and process structurally similar amino acids such as valine, to avoid such errors it has two additional distinct tRNA(Ile)-dependent editing activities. One activity is designated as 'pretransfer' editing and involves the hydrolysis of activated Val-AMP. The other activity is designated 'posttransfer' editing and involves deacylation of mischarged Val-tRNA(Ile). This is Isoleucine--tRNA ligase from Escherichia coli O9:H4 (strain HS).